A 967-amino-acid chain; its full sequence is Protein moonraker (967 aa).

The interval S178–H201 is disordered. The span at H179–P188 shows a compositional bias: polar residues. Phosphoserine is present on residues S287 and S409. Disordered stretches follow at residues A401 to S431 and K490 to T601. A compositionally biased stretch (polar residues) spans Q525–L543. The span at W557 to S568 shows a compositional bias: pro residues. A coiled-coil region spans residues A616 to D642. A phosphoserine mark is found at S700 and S826. Residues R849–P872 form a disordered region. The interval G885–T967 is necessary and sufficient for CEP20-binding.

Interacts with CEP63. Interacts with WDR62. Forms a complex with OFD1 and CEP20/FOR20. Interacts with PCM1.

It localises to the cytoplasm. The protein resides in the cytoskeleton. Its subcellular location is the microtubule organizing center. It is found in the centrosome. The protein localises to the centriole. It localises to the centriolar satellite. Its function is as follows. Involved in centriole duplication. Positively regulates CEP63 centrosomal localization. Required for WDR62 centrosomal localization and promotes the centrosomal localization of CDK2. May play a role in cilium assembly. This Homo sapiens (Human) protein is Protein moonraker (KIAA0753).